We begin with the raw amino-acid sequence, 434 residues long: Histidinol dehydrogenase (434 aa).

Tyr130, Gln191, and Asn214 together coordinate NAD(+). Ser237, Gln259, and His262 together coordinate substrate. Zn(2+)-binding residues include Gln259 and His262. Catalysis depends on proton acceptor residues Glu327 and His328. Substrate is bound by residues His328, Asp361, Glu415, and His420. Asp361 serves as a coordination point for Zn(2+). Residue His420 participates in Zn(2+) binding.

This sequence belongs to the histidinol dehydrogenase family. Zn(2+) serves as cofactor.

It catalyses the reaction L-histidinol + 2 NAD(+) + H2O = L-histidine + 2 NADH + 3 H(+). It functions in the pathway amino-acid biosynthesis; L-histidine biosynthesis; L-histidine from 5-phospho-alpha-D-ribose 1-diphosphate: step 9/9. Functionally, catalyzes the sequential NAD-dependent oxidations of L-histidinol to L-histidinaldehyde and then to L-histidine. This Chromobacterium violaceum (strain ATCC 12472 / DSM 30191 / JCM 1249 / CCUG 213 / NBRC 12614 / NCIMB 9131 / NCTC 9757 / MK) protein is Histidinol dehydrogenase.